A 426-amino-acid chain; its full sequence is D-tagatose-1,6-bisphosphate aldolase subunit KbaZ (426 aa).

Belongs to the GatZ/KbaZ family. KbaZ subfamily. In terms of assembly, forms a complex with KbaY.

Its pathway is carbohydrate metabolism; D-tagatose 6-phosphate degradation; D-glyceraldehyde 3-phosphate and glycerone phosphate from D-tagatose 6-phosphate: step 2/2. Functionally, component of the tagatose-1,6-bisphosphate aldolase KbaYZ that is required for full activity and stability of the Y subunit. Could have a chaperone-like function for the proper and stable folding of KbaY. When expressed alone, KbaZ does not show any aldolase activity. This is D-tagatose-1,6-bisphosphate aldolase subunit KbaZ from Escherichia coli O6:K15:H31 (strain 536 / UPEC).